A 37-amino-acid polypeptide reads, in one-letter code: Lambda-hexatoxin-Hv1c (37 aa).

4 cysteine pairs are disulfide-bonded: Cys-3–Cys-17, Cys-10–Cys-22, Cys-13–Cys-14, and Cys-16–Cys-32.

It belongs to the neurotoxin 11 (kappa toxin) family. Expressed by the venom gland.

The protein resides in the secreted. Its function is as follows. This excitatory toxin inhibits insect calcium-activated potassium (KCa) channels (Slo-type). Pan-neuronal expression in Drosophila is lethal but flies engineered to express the toxin only in clock neurons have defects in circadian rhythm but a normal lifespan. The polypeptide is Lambda-hexatoxin-Hv1c (Hadronyche versuta (Blue mountains funnel-web spider)).